We begin with the raw amino-acid sequence, 113 residues long: Flagellar hook-basal body complex protein FliE (113 aa).

This sequence belongs to the FliE family.

The protein resides in the bacterial flagellum basal body. This chain is Flagellar hook-basal body complex protein FliE, found in Burkholderia mallei (strain NCTC 10247).